The sequence spans 226 residues: ATP-dependent dethiobiotin synthetase BioD (226 aa).

12 to 17 (GVGKTV) is an ATP binding site. Thr-16 contacts Mg(2+). Residue Lys-37 is part of the active site. Thr-41 provides a ligand contact to substrate. Residues Asp-49, 108-111 (EGAG), 169-170 (GS), and 197-199 (PAG) contribute to the ATP site. The Mg(2+) site is built by Asp-49 and Glu-108.

It belongs to the dethiobiotin synthetase family. Homodimer. Mg(2+) serves as cofactor.

The protein localises to the cytoplasm. The catalysed reaction is (7R,8S)-7,8-diammoniononanoate + CO2 + ATP = (4R,5S)-dethiobiotin + ADP + phosphate + 3 H(+). Its pathway is cofactor biosynthesis; biotin biosynthesis; biotin from 7,8-diaminononanoate: step 1/2. Catalyzes a mechanistically unusual reaction, the ATP-dependent insertion of CO2 between the N7 and N8 nitrogen atoms of 7,8-diaminopelargonic acid (DAPA, also called 7,8-diammoniononanoate) to form a ureido ring. The polypeptide is ATP-dependent dethiobiotin synthetase BioD (Mycobacterium tuberculosis (strain ATCC 25177 / H37Ra)).